A 398-amino-acid chain; its full sequence is DNA replication and repair protein RecF (398 aa).

Residue 30–37 participates in ATP binding; the sequence is GRNGFGKT.

It belongs to the RecF family.

It is found in the cytoplasm. Functionally, the RecF protein is involved in DNA metabolism; it is required for DNA replication and normal SOS inducibility. RecF binds preferentially to single-stranded, linear DNA. It also seems to bind ATP. The protein is DNA replication and repair protein RecF of Corynebacterium efficiens (strain DSM 44549 / YS-314 / AJ 12310 / JCM 11189 / NBRC 100395).